The sequence spans 542 residues: Bifunctional pantoate ligase/cytidylate kinase (542 aa).

The pantoate--beta-alanine ligase stretch occupies residues 1 to 280 (MHWLRTVAAL…VGQTRLIDNL (280 aa)). 28–35 (MGSLHEGH) contacts ATP. The Proton donor role is filled by His-35. Gln-59 provides a ligand contact to (R)-pantoate. Gln-59 contributes to the beta-alanine binding site. 150–153 (GQKD) is an ATP binding site. (R)-pantoate is bound at residue Gln-156. ATP-binding positions include Val-179 and 187–190 (CSSR). Residues 281–542 (LLSPEQGDPL…ERSGPARLDQ (262 aa)) form a cytidylate kinase region. The interval 287–311 (GDPLPERVQHAAPPSSGTTSPPRRP) is disordered.

This sequence in the N-terminal section; belongs to the pantothenate synthetase family. In the C-terminal section; belongs to the cytidylate kinase family. Type 1 subfamily.

It is found in the cytoplasm. It catalyses the reaction (R)-pantoate + beta-alanine + ATP = (R)-pantothenate + AMP + diphosphate + H(+). It carries out the reaction CMP + ATP = CDP + ADP. The catalysed reaction is dCMP + ATP = dCDP + ADP. It functions in the pathway cofactor biosynthesis; (R)-pantothenate biosynthesis; (R)-pantothenate from (R)-pantoate and beta-alanine: step 1/1. Functionally, catalyzes the condensation of pantoate with beta-alanine in an ATP-dependent reaction via a pantoyl-adenylate intermediate. In terms of biological role, catalyzes the transfer of a phosphate group from ATP to either CMP or dCMP to form CDP or dCDP and ADP, respectively. This chain is Bifunctional pantoate ligase/cytidylate kinase, found in Synechococcus sp. (strain JA-2-3B'a(2-13)) (Cyanobacteria bacterium Yellowstone B-Prime).